Reading from the N-terminus, the 435-residue chain is Methanethiol oxidase (435 aa).

The signal sequence occupies residues 1-24 (MKKHLLAGACALAMGFAVIPGTFA).

Belongs to the selenium-binding protein family. As to quaternary structure, homotetramer. Cu cation is required as a cofactor.

The protein resides in the periplasm. The enzyme catalyses methanethiol + O2 + H2O = hydrogen sulfide + formaldehyde + H2O2 + H(+). Its pathway is organosulfur degradation. Inhibited by EDTA but not by EGTA. Catalyzes the oxidation of methanethiol. Can also degrade ethanethiol, but not methanol, methylamine or dimethylsulfide. The chain is Methanethiol oxidase from Hyphomicrobium sp.